A 319-amino-acid polypeptide reads, in one-letter code: NADH-ubiquinone oxidoreductase chain 1 (319 aa).

8 consecutive transmembrane segments (helical) span residues 3–23 (LITL…AMAF), 74–94 (LFLL…IPLP), 106–126 (ILFI…SGWA), 149–169 (TLGL…LTTF), 175–195 (AVWL…STLA), 226–246 (LFFL…TILF), 254–274 (LTIN…FLWV), and 294–314 (FLPL…SMAG).

It belongs to the complex I subunit 1 family.

Its subcellular location is the mitochondrion inner membrane. It carries out the reaction a ubiquinone + NADH + 5 H(+)(in) = a ubiquinol + NAD(+) + 4 H(+)(out). In terms of biological role, core subunit of the mitochondrial membrane respiratory chain NADH dehydrogenase (Complex I) that is believed to belong to the minimal assembly required for catalysis. Complex I functions in the transfer of electrons from NADH to the respiratory chain. The immediate electron acceptor for the enzyme is believed to be ubiquinone. The sequence is that of NADH-ubiquinone oxidoreductase chain 1 (MT-ND1) from Polypterus ornatipinnis (Ornate bichir).